Here is a 432-residue protein sequence, read N- to C-terminus: MFVDQIKIEVKAGKGGDGMVAFRREKYVPNGGPAGGDGGKGGSIILKVDQGLRTLMDFRYHRIFKAKPGQNGMIKGMYGRGADDTYISVPQGTTVTDAETGELLGDLVEADDELVVAKGGCGGRGNIKFASPKNPAPEIAENGEPGEERKLKLELKVLADVGLVGFPSVGKSTLLSVVTSAKPKIAEYHFTTLVPNLGMVRLDDGRDYVMADLPGLIEGASQGVGLGIQFLRHVERTRVILHLIDMSGVEGRDPYDDFVKINEELKVYDPTLLDRPQIVVASKMDMPDSAKNLAEFKVKLAKDKTLKQVPEVMEISSLTHQGLKELTHRTADVLESTPKFETLAEKEQASKVYTFKEDEPAFKITRDSDATWVLSGEKLERLFKMTNFNHDESLMRFARQLRGMGVDDALRERGVKGGDLVRIEDFTFEFVE.

Residues 1-158 (MFVDQIKIEV…RKLKLELKVL (158 aa)) form the Obg domain. The OBG-type G domain maps to 159 to 335 (ADVGLVGFPS…LTHRTADVLE (177 aa)). GTP-binding positions include 165 to 172 (GFPSVGKS), 190 to 194 (FTTLV), 212 to 215 (DLPG), 282 to 285 (SKMD), and 316 to 318 (SSL). Mg(2+) contacts are provided by Ser172 and Thr192. The region spanning 354 to 432 (TFKEDEPAFK…IEDFTFEFVE (79 aa)) is the OCT domain.

This sequence belongs to the TRAFAC class OBG-HflX-like GTPase superfamily. OBG GTPase family. As to quaternary structure, monomer. Mg(2+) is required as a cofactor.

It is found in the cytoplasm. Its function is as follows. An essential GTPase which binds GTP, GDP and possibly (p)ppGpp with moderate affinity, with high nucleotide exchange rates and a fairly low GTP hydrolysis rate. Plays a role in control of the cell cycle, stress response, ribosome biogenesis and in those bacteria that undergo differentiation, in morphogenesis control. The chain is GTPase Obg from Ligilactobacillus salivarius (strain UCC118) (Lactobacillus salivarius).